Here is a 328-residue protein sequence, read N- to C-terminus: Phenylalanine--tRNA ligase alpha subunit (328 aa).

Glu-245 lines the Mg(2+) pocket.

It belongs to the class-II aminoacyl-tRNA synthetase family. Phe-tRNA synthetase alpha subunit type 1 subfamily. In terms of assembly, tetramer of two alpha and two beta subunits. Mg(2+) is required as a cofactor.

The protein resides in the cytoplasm. It carries out the reaction tRNA(Phe) + L-phenylalanine + ATP = L-phenylalanyl-tRNA(Phe) + AMP + diphosphate + H(+). In Helicobacter pylori (strain Shi470), this protein is Phenylalanine--tRNA ligase alpha subunit.